A 549-amino-acid chain; its full sequence is Glucose-6-phosphate isomerase (549 aa).

The Proton donor role is filled by E355. Active-site residues include H386 and K514.

It belongs to the GPI family.

The protein localises to the cytoplasm. The enzyme catalyses alpha-D-glucose 6-phosphate = beta-D-fructose 6-phosphate. The protein operates within carbohydrate biosynthesis; gluconeogenesis. It participates in carbohydrate degradation; glycolysis; D-glyceraldehyde 3-phosphate and glycerone phosphate from D-glucose: step 2/4. Its function is as follows. Catalyzes the reversible isomerization of glucose-6-phosphate to fructose-6-phosphate. This chain is Glucose-6-phosphate isomerase, found in Salmonella arizonae (strain ATCC BAA-731 / CDC346-86 / RSK2980).